The primary structure comprises 984 residues: Protein translocase subunit SecA (984 aa).

ATP is bound by residues Gln-96, 114-118, and Asp-595; that span reads GEGKT. 2 stretches are compositionally biased toward basic and acidic residues: residues 930 to 942 and 952 to 971; these read EHEEEKKHQRLLE and KSDKKPRPKTLKERLKEERL. A disordered region spans residues 930–984; the sequence is EHEEEKKHQRLLEEAELQGVQGKSDKKPRPKTLKERLKEERLRKRKLKAKKKEQE. A compositionally biased stretch (basic residues) spans 972 to 984; it reads RKRKLKAKKKEQE.

Belongs to the SecA family. As to quaternary structure, monomer and homodimer. Part of the essential Sec protein translocation apparatus which comprises SecA, SecYEG and auxiliary proteins SecDF. Other proteins may also be involved.

It localises to the cell inner membrane. It is found in the cytoplasm. The enzyme catalyses ATP + H2O + cellular proteinSide 1 = ADP + phosphate + cellular proteinSide 2.. In terms of biological role, part of the Sec protein translocase complex. Interacts with the SecYEG preprotein conducting channel. Has a central role in coupling the hydrolysis of ATP to the transfer of proteins into and across the cell membrane, serving as an ATP-driven molecular motor driving the stepwise translocation of polypeptide chains across the membrane. The sequence is that of Protein translocase subunit SecA from Aquifex aeolicus (strain VF5).